Reading from the N-terminus, the 466-residue chain is Ribulose bisphosphate carboxylase large chain (466 aa).

Lys5 bears the N6,N6,N6-trimethyllysine mark. Substrate is bound by residues Asn114 and Thr164. Residue Lys166 is the Proton acceptor of the active site. Lys168 contacts substrate. The Mg(2+) site is built by Lys192, Asp194, and Glu195. Position 192 is an N6-carboxylysine (Lys192). His285 functions as the Proton acceptor in the catalytic mechanism. 3 residues coordinate substrate: Arg286, His318, and Ser370.

The protein belongs to the RuBisCO large chain family. Type I subfamily. Heterohexadecamer of 8 large chains and 8 small chains; disulfide-linked. The disulfide link is formed within the large subunit homodimers. Requires Mg(2+) as cofactor. Post-translationally, the disulfide bond which can form in the large chain dimeric partners within the hexadecamer appears to be associated with oxidative stress and protein turnover.

The protein resides in the plastid. It is found in the chloroplast. The catalysed reaction is 2 (2R)-3-phosphoglycerate + 2 H(+) = D-ribulose 1,5-bisphosphate + CO2 + H2O. The enzyme catalyses D-ribulose 1,5-bisphosphate + O2 = 2-phosphoglycolate + (2R)-3-phosphoglycerate + 2 H(+). Functionally, ruBisCO catalyzes two reactions: the carboxylation of D-ribulose 1,5-bisphosphate, the primary event in carbon dioxide fixation, as well as the oxidative fragmentation of the pentose substrate in the photorespiration process. Both reactions occur simultaneously and in competition at the same active site. The chain is Ribulose bisphosphate carboxylase large chain from Drosera peltata (Pale sundew).